The following is a 160-amino-acid chain: Transmembrane protein 220 (160 aa).

A run of 5 helical transmembrane segments spans residues 3 to 23 (PALWRACNGLMAAFFALAALV), 30 to 50 (AEVWVVVYTIPAVLTLLVGLN), 62 to 82 (ISAIHILFCTVWAVGLASYLL), 100 to 120 (GLVIITAWIILCHSSSKNPVG), and 125 to 145 (LAIAIVITLFPFISWVYIYIN).

The protein localises to the membrane. In Homo sapiens (Human), this protein is Transmembrane protein 220 (TMEM220).